Here is a 391-residue protein sequence, read N- to C-terminus: MSGPVPSRARVYTDVNTHRPREYWDYESHVVEWGNQDDYQLVRKLGRGKYSEVFEAINITNNEKVVVKILKPVKKKKIKREIKILENLRGGPNIITLADIVKDPVSRTPALVFEHVNNTDFKQLYQTLTDYDIRFYMYEILKALDYCHSMGIMHRDVKPHNVMIDHEHRKLRLIDWGLAEFYHPGQEYNVRVASRYFKGPELLVDYQMYDYSLDMWSLGCMLASMIFRKEPFFHGHDNYDQLVRIAKVLGTEDLYDYIDKYNIELDPRFNDILGRHSRKRWERFVHSENQHLVSPEALDFLDKLLRYDHQSRLTAREAMEHPYFYTVVKDQARMSSAGMAGGSTPVSSANMMSGISSVPTPSPLGPLAGSPVIAAANSLGIPVPAAAGAQQ.

An interaction with beta subunit region spans residues 36-41 (QDDYQL). One can recognise a Protein kinase domain in the interval 39–324 (YQLVRKLGRG…AREAMEHPYF (286 aa)). ATP-binding positions include 45-53 (LGRGKYSEV) and Lys-68. Asp-156 functions as the Proton acceptor in the catalytic mechanism. A phosphothreonine; by CDK1 mark is found at Thr-344 and Thr-360. Residues Ser-362 and Ser-370 each carry the phosphoserine; by CDK1 modification.

This sequence belongs to the protein kinase superfamily. Ser/Thr protein kinase family. CK2 subfamily. In terms of assembly, heterotetramer composed of two catalytic subunits (alpha chain and/or alpha' chain) and two regulatory subunits (beta chains). The tetramer can exist as a combination of 2 alpha/2 beta, 2 alpha'/2 beta or 1 alpha/1 alpha'/2 beta subunits. Also part of a CK2-SPT16-SSRP1 complex composed of SSRP1, SUPT16H, CSNK2A1, CSNK2A2 and CSNK2B, which forms following UV irradiation. Interacts with RNPS1. Interacts with SNAI1. Interacts with PML. Interacts with CCAR2. Interacts with HIRIP3. In terms of processing, phosphorylated at Thr-344, Thr-360, Ser-362 and Ser-370 by CDK1 in prophase and metaphase and dephosphorylated during anaphase. Phosphorylation does not directly affect casein kinase 2 activity, but may contribute to its regulation by forming binding sites for interacting proteins and/or targeting it to different compartments.

It is found in the nucleus. It catalyses the reaction L-seryl-[protein] + ATP = O-phospho-L-seryl-[protein] + ADP + H(+). The enzyme catalyses L-threonyl-[protein] + ATP = O-phospho-L-threonyl-[protein] + ADP + H(+). With respect to regulation, constitutively active protein kinase whose activity is not directly affected by phosphorylation. Seems to be regulated by level of expression and localization. Catalytic subunit of a constitutively active serine/threonine-protein kinase complex that phosphorylates a large number of substrates containing acidic residues C-terminal to the phosphorylated serine or threonine. Regulates numerous cellular processes, such as cell cycle progression, apoptosis and transcription, as well as viral infection. May act as a regulatory node which integrates and coordinates numerous signals leading to an appropriate cellular response. During mitosis, functions as a component of the p53/TP53-dependent spindle assembly checkpoint (SAC) that maintains cyclin-B-CDK1 activity and G2 arrest in response to spindle damage. Also required for p53/TP53-mediated apoptosis, phosphorylating 'Ser-392' of p53/TP53 following UV irradiation. Phosphorylates a number of DNA repair proteins in response to DNA damage, such as MDC1, MRE11, RAD9A, RAD51 and HTATSF1, promoting their recruitment to DNA damage sites. Can also negatively regulate apoptosis. Phosphorylates the caspases CASP9 and CASP2 and the apoptotic regulator NOL3. Phosphorylation protects CASP9 from cleavage and activation by CASP8, and inhibits the dimerization of CASP2 and activation of CASP8. Phosphorylates YY1, protecting YY1 from cleavage by CASP7 during apoptosis. Regulates transcription by direct phosphorylation of RNA polymerases I, II, III and IV. Also phosphorylates and regulates numerous transcription factors including NF-kappa-B, STAT1, CREB1, IRF1, IRF2, ATF1, ATF4, SRF, MAX, JUN, FOS, MYC and MYB. Phosphorylates Hsp90 and its co-chaperones FKBP4 and CDC37, which is essential for chaperone function. Mediates sequential phosphorylation of FNIP1, promoting its gradual interaction with Hsp90, leading to activate both kinase and non-kinase client proteins of Hsp90. Regulates Wnt signaling by phosphorylating CTNNB1 and the transcription factor LEF1. Acts as an ectokinase that phosphorylates several extracellular proteins. Phosphorylates PML at 'Ser-565' and primes it for ubiquitin-mediated degradation. Plays an important role in the circadian clock function by phosphorylating BMAL1 at 'Ser-90' which is pivotal for its interaction with CLOCK and which controls CLOCK nuclear entry. Phosphorylates FMR1, promoting FMR1-dependent formation of a membraneless compartment. May phosphorylate histone H2A on 'Ser-1'. In Rattus norvegicus (Rat), this protein is Casein kinase II subunit alpha (Csnk2a1).